Consider the following 300-residue polypeptide: 17-beta-hydroxysteroid dehydrogenase 13 (300 aa).

Positions M1–L19 are cleaved as a signal peptide. S33 bears the Phosphoserine mark. L40 to D67 contributes to the NAD(+) binding site. At S69 the chain carries Phosphoserine. K79 is modified (N6-acetyllysine). Residue S172 coordinates substrate. Catalysis depends on Y185, which acts as the Proton acceptor. K189 is a binding site for NAD(+).

It belongs to the short-chain dehydrogenases/reductases (SDR) family.

It localises to the lipid droplet. The protein localises to the endoplasmic reticulum. The enzyme catalyses 17beta-estradiol + NAD(+) = estrone + NADH + H(+). The catalysed reaction is all-trans-retinol + NAD(+) = all-trans-retinal + NADH + H(+). It carries out the reaction all-trans-retinal + NAD(+) + H2O = all-trans-retinoate + NADH + 2 H(+). Its function is as follows. Plays a pivotal role in hepatic lipid metabolism. In vitro, it catalyzes the oxidation of a variety of lipid substrates, including 17beta-estradiol, retinol, retinal, and leukotriene B4. The polypeptide is 17-beta-hydroxysteroid dehydrogenase 13 (Hsd17b13) (Rattus norvegicus (Rat)).